The sequence spans 977 residues: Phosphatidylinositol 4-kinase PIK1alpha (977 aa).

Positions 1-125 (MSADITETPN…QAVRNLITKI (125 aa)) constitute a PIK helical domain. Residues 205 to 261 (MSADIPKGSHSDDETATSSSIKPSLSRSASVPRRNTKKTSLSFSSDESEAYTTDDDD) form a disordered region. The span at 220-233 (ATSSSIKPSLSRSA) shows a compositional bias: polar residues. Over residues 250 to 261 (DESEAYTTDDDD) the composition is skewed to acidic residues. Residues 679-960 (EDWNTKKQRI…FLIGKSLGSM (282 aa)) enclose the PI3K/PI4K catalytic domain. Residues 685–691 (KQRIKKS) are G-loop. The interval 826 to 834 (QIKDRHNGN) is catalytic loop. The activation loop stretch occupies residues 845–869 (HIDFGFLLSNSPGSVGFEAAPFKLT).

This sequence belongs to the PI3/PI4-kinase family. Type III PI4K subfamily.

The protein localises to the nucleus. It carries out the reaction a 1,2-diacyl-sn-glycero-3-phospho-(1D-myo-inositol) + ATP = a 1,2-diacyl-sn-glycero-3-phospho-(1D-myo-inositol 4-phosphate) + ADP + H(+). Functionally, acts on phosphatidylinositol (PI) in the first committed step in the production of the second messenger inositol 1,4,5,-trisphosphate. The sequence is that of Phosphatidylinositol 4-kinase PIK1alpha (PIKALPHA) from Candida albicans (strain SC5314 / ATCC MYA-2876) (Yeast).